We begin with the raw amino-acid sequence, 191 residues long: Adenylate kinase (191 aa).

Residue 10-15 participates in ATP binding; sequence GAGKGT. The tract at residues 30 to 59 is NMP; it reads STGDMLRAARTSGTEMGNLVAGVMDRGELV. AMP contacts are provided by residues T31, R36, 57-59, 83-86, and Q90; these read ELV and GFPR. Residues 124–140 form an LID region; it reads NRAKEAAAAGQPVRADD. R125 contributes to the ATP binding site. Residues R137 and R148 each coordinate AMP. G176 provides a ligand contact to ATP.

This sequence belongs to the adenylate kinase family. Monomer.

The protein localises to the cytoplasm. It catalyses the reaction AMP + ATP = 2 ADP. Its pathway is purine metabolism; AMP biosynthesis via salvage pathway; AMP from ADP: step 1/1. Catalyzes the reversible transfer of the terminal phosphate group between ATP and AMP. Plays an important role in cellular energy homeostasis and in adenine nucleotide metabolism. In Jannaschia sp. (strain CCS1), this protein is Adenylate kinase.